Here is a 508-residue protein sequence, read N- to C-terminus: Photosystem II CP47 reaction center protein (508 aa).

6 helical membrane passes run 21–36 (SVHI…WAGS), 101–115 (IVFS…IWHW), 140–156 (GIHL…FGAF), 203–218 (IAAG…FHLS), 237–252 (VLSS…AFVV), and 457–472 (SFAL…HGAR).

It belongs to the PsbB/PsbC family. PsbB subfamily. PSII is composed of 1 copy each of membrane proteins PsbA, PsbB, PsbC, PsbD, PsbE, PsbF, PsbH, PsbI, PsbJ, PsbK, PsbL, PsbM, PsbT, PsbX, PsbY, PsbZ, Psb30/Ycf12, at least 3 peripheral proteins of the oxygen-evolving complex and a large number of cofactors. It forms dimeric complexes. It depends on Binds multiple chlorophylls. PSII binds additional chlorophylls, carotenoids and specific lipids. as a cofactor.

Its subcellular location is the plastid. It localises to the chloroplast thylakoid membrane. In terms of biological role, one of the components of the core complex of photosystem II (PSII). It binds chlorophyll and helps catalyze the primary light-induced photochemical processes of PSII. PSII is a light-driven water:plastoquinone oxidoreductase, using light energy to abstract electrons from H(2)O, generating O(2) and a proton gradient subsequently used for ATP formation. The chain is Photosystem II CP47 reaction center protein from Aethionema cordifolium (Lebanon stonecress).